The sequence spans 408 residues: Putative glutamate--cysteine ligase 2 (408 aa).

The protein belongs to the glutamate--cysteine ligase type 2 family. YbdK subfamily.

It catalyses the reaction L-cysteine + L-glutamate + ATP = gamma-L-glutamyl-L-cysteine + ADP + phosphate + H(+). Functionally, ATP-dependent carboxylate-amine ligase which exhibits weak glutamate--cysteine ligase activity. This Bradyrhizobium sp. (strain ORS 278) protein is Putative glutamate--cysteine ligase 2.